Reading from the N-terminus, the 545-residue chain is Chaperonin GroEL (545 aa).

ATP is bound by residues 29–32 (TLGP), lysine 50, 86–90 (DGTTT), glycine 413, and aspartate 495.

This sequence belongs to the chaperonin (HSP60) family. As to quaternary structure, forms a cylinder of 14 subunits composed of two heptameric rings stacked back-to-back. Interacts with the co-chaperonin GroES.

Its subcellular location is the cytoplasm. The catalysed reaction is ATP + H2O + a folded polypeptide = ADP + phosphate + an unfolded polypeptide.. Its function is as follows. Together with its co-chaperonin GroES, plays an essential role in assisting protein folding. The GroEL-GroES system forms a nano-cage that allows encapsulation of the non-native substrate proteins and provides a physical environment optimized to promote and accelerate protein folding. This Borrelia garinii subsp. bavariensis (strain ATCC BAA-2496 / DSM 23469 / PBi) (Borreliella bavariensis) protein is Chaperonin GroEL.